The following is a 358-amino-acid chain: 3-isopropylmalate dehydrogenase (358 aa).

77–90 (GEKWDSLPRELRPE) contacts NAD(+). Substrate is bound by residues arginine 97, arginine 107, arginine 135, and aspartate 220. Aspartate 220, aspartate 244, and aspartate 248 together coordinate Mg(2+). 277–289 (GSAPDIAGQGIAN) contributes to the NAD(+) binding site.

Belongs to the isocitrate and isopropylmalate dehydrogenases family. LeuB type 1 subfamily. Homodimer. It depends on Mg(2+) as a cofactor. Mn(2+) is required as a cofactor.

Its subcellular location is the cytoplasm. The enzyme catalyses (2R,3S)-3-isopropylmalate + NAD(+) = 4-methyl-2-oxopentanoate + CO2 + NADH. The protein operates within amino-acid biosynthesis; L-leucine biosynthesis; L-leucine from 3-methyl-2-oxobutanoate: step 3/4. Functionally, catalyzes the oxidation of 3-carboxy-2-hydroxy-4-methylpentanoate (3-isopropylmalate) to 3-carboxy-4-methyl-2-oxopentanoate. The product decarboxylates to 4-methyl-2 oxopentanoate. In Wolinella succinogenes (strain ATCC 29543 / DSM 1740 / CCUG 13145 / JCM 31913 / LMG 7466 / NCTC 11488 / FDC 602W) (Vibrio succinogenes), this protein is 3-isopropylmalate dehydrogenase.